We begin with the raw amino-acid sequence, 452 residues long: Tylactone mycaminosyltransferase (452 aa).

Over residues 1–16 (MRRALDDRRRGPHGPE) the composition is skewed to basic and acidic residues. The tract at residues 1–20 (MRRALDDRRRGPHGPEGKPP) is disordered.

It belongs to the glycosyltransferase 28 family.

It catalyses the reaction tylactone + dTDP-alpha-D-mycaminose = 5-O-beta-D-mycaminosyltylactone + dTDP + H(+). Its pathway is antibiotic biosynthesis; tylosin biosynthesis. With respect to regulation, the activity of TylM2 is substantially increased by the addition of the accessory protein TylM3. Its function is as follows. Involved in the biosynthesis of the macrolide antibiotic tylosin derived from the polyketide lactone tylactone. Catalyzes the transfer of alpha-D-mycaminosyl from dTDP-alpha-D-mycaminose to the 5-hydroxyl group of tylactone to yield 5-O-mycaminosytylactone. It can also accept 16-membered tylactone and 12-membered ring macrolide. The polypeptide is Tylactone mycaminosyltransferase (Streptomyces fradiae (Streptomyces roseoflavus)).